Consider the following 415-residue polypeptide: D-galactonate dehydratase family member RspA (415 aa).

Substrate contacts are provided by N48 and H133. Y170 acts as the Proton donor/acceptor in catalysis. Residue D223 coordinates Mg(2+). Catalysis depends on H225, which acts as the Proton donor/acceptor. 2 residues coordinate Mg(2+): E249 and E275. Positions 275, 296, 325, 329, and 352 each coordinate substrate.

It belongs to the mandelate racemase/muconate lactonizing enzyme family. GalD subfamily. Mg(2+) serves as cofactor.

The enzyme catalyses D-mannonate = 2-dehydro-3-deoxy-D-gluconate + H2O. Functionally, has low D-mannonate dehydratase activity (in vitro), suggesting that this is not a physiological substrate and that it has no significant role in D-mannonate degradation in vivo. Has no detectable activity with a panel of 70 other acid sugars (in vitro). The polypeptide is D-galactonate dehydratase family member RspA (rspA) (Escherichia coli (strain MS 21-1)).